The primary structure comprises 102 residues: Small ribosomal subunit protein uS10 (102 aa).

The protein belongs to the universal ribosomal protein uS10 family. As to quaternary structure, part of the 30S ribosomal subunit.

Its function is as follows. Involved in the binding of tRNA to the ribosomes. In Thermosipho melanesiensis (strain DSM 12029 / CIP 104789 / BI429), this protein is Small ribosomal subunit protein uS10.